The chain runs to 210 residues: Somatotropin (210 aa).

The first 22 residues, 1–22, serve as a signal peptide directing secretion; that stretch reads MGQVFLLMPVLLVSCFLSQGAA. Position 38 (His-38) interacts with Zn(2+). Cys-71 and Cys-183 are oxidised to a cystine. Residue Glu-192 participates in Zn(2+) binding. Cys-200 and Cys-208 are oxidised to a cystine.

Belongs to the somatotropin/prolactin family.

It localises to the secreted. In terms of biological role, growth hormone plays an important role in growth control and is involved in the regulation of several anabolic processes. Implicated as an osmoregulatory substance important for seawater adaptation. The sequence is that of Somatotropin (gh) from Oncorhynchus keta (Chum salmon).